Here is a 342-residue protein sequence, read N- to C-terminus: Protein pelota homolog (342 aa).

This sequence belongs to the eukaryotic release factor 1 family. Pelota subfamily. As to quaternary structure, monomer. A divalent metal cation is required as a cofactor.

Its subcellular location is the cytoplasm. Functionally, may function in recognizing stalled ribosomes, interact with stem-loop structures in stalled mRNA molecules, and effect endonucleolytic cleavage of the mRNA. May play a role in the release non-functional ribosomes and degradation of damaged mRNAs. Has endoribonuclease activity. The protein is Protein pelota homolog of Methanocorpusculum labreanum (strain ATCC 43576 / DSM 4855 / Z).